The primary structure comprises 355 residues: UDP-N-acetylglucosamine--N-acetylmuramyl-(pentapeptide) pyrophosphoryl-undecaprenol N-acetylglucosamine transferase (355 aa).

UDP-N-acetyl-alpha-D-glucosamine-binding positions include Thr-11–Gly-13, Asn-120, Arg-161, Ser-188, and Gln-280.

This sequence belongs to the glycosyltransferase 28 family. MurG subfamily.

It localises to the cell inner membrane. It catalyses the reaction di-trans,octa-cis-undecaprenyl diphospho-N-acetyl-alpha-D-muramoyl-L-alanyl-D-glutamyl-meso-2,6-diaminopimeloyl-D-alanyl-D-alanine + UDP-N-acetyl-alpha-D-glucosamine = di-trans,octa-cis-undecaprenyl diphospho-[N-acetyl-alpha-D-glucosaminyl-(1-&gt;4)]-N-acetyl-alpha-D-muramoyl-L-alanyl-D-glutamyl-meso-2,6-diaminopimeloyl-D-alanyl-D-alanine + UDP + H(+). It participates in cell wall biogenesis; peptidoglycan biosynthesis. In terms of biological role, cell wall formation. Catalyzes the transfer of a GlcNAc subunit on undecaprenyl-pyrophosphoryl-MurNAc-pentapeptide (lipid intermediate I) to form undecaprenyl-pyrophosphoryl-MurNAc-(pentapeptide)GlcNAc (lipid intermediate II). The protein is UDP-N-acetylglucosamine--N-acetylmuramyl-(pentapeptide) pyrophosphoryl-undecaprenol N-acetylglucosamine transferase of Prochlorococcus marinus (strain MIT 9211).